The following is a 215-amino-acid chain: MSALPFVRVRQHVNPLAQKYLTPANPLEWEKVYSSPHQPLHLDIGCARGRFVLQMAQVEPRWNFLGLEIREPLVIEANQFRSQLGLSNLHYLYCNANNSLQPLLSSLPTGILQRVTIQFPDPWFKTRHAKRRVVQPELVQDIANYLAVGGVVFLQSDMEFVAVEMCDRFAANPAFKKVGSGEWLSENPLPVATERETTTQNRGEPVYRALFERIS.

The S-adenosyl-L-methionine site is built by Asp43, Glu68, Asn95, and Asp121. Asp121 is a catalytic residue. Substrate contacts are provided by Lys125 and Asp157.

The protein belongs to the class I-like SAM-binding methyltransferase superfamily. TrmB family.

The enzyme catalyses guanosine(46) in tRNA + S-adenosyl-L-methionine = N(7)-methylguanosine(46) in tRNA + S-adenosyl-L-homocysteine. It functions in the pathway tRNA modification; N(7)-methylguanine-tRNA biosynthesis. Catalyzes the formation of N(7)-methylguanine at position 46 (m7G46) in tRNA. This chain is tRNA (guanine-N(7)-)-methyltransferase, found in Trichormus variabilis (strain ATCC 29413 / PCC 7937) (Anabaena variabilis).